The following is a 362-amino-acid chain: MGSSFGTLFRISTFGESHGGGVGVILEGCPPRLELDPLAIQAELDRRRPGQSKITTPRKEADQVEILSGVMDGLTLGTPIAMVVRNKDQRPQDYKEVEVAFRPSHADATYQAKYGIQARSGGGRASARETIGRVAAGAIARQMLQRSHGTDVVAWVKRIHDLEAQVDASTVTREAVDANIVRCPDAEMADRMIDRIEAIGQDGDSCGGVIECVVRRPPVGLGMPVFDKLEADLAKAVMSLPATKGFEIGSGFAGTLLRGSEHNDAFLPSDDGRLRTASNNSGGIQGGISNGEPIVIRVAFKPTATIRKEQQTINDRGEATTLAAKGRHDPCVLPRAVPMVEAMVNLVLADHLLRQQGQCSLW.

Position 47 (Arg-47) interacts with NADP(+). FMN is bound by residues 124-126, Gly-286, 301-305, and Arg-327; these read RAS and KPTAT.

This sequence belongs to the chorismate synthase family. In terms of assembly, homotetramer. FMNH2 serves as cofactor.

The enzyme catalyses 5-O-(1-carboxyvinyl)-3-phosphoshikimate = chorismate + phosphate. The protein operates within metabolic intermediate biosynthesis; chorismate biosynthesis; chorismate from D-erythrose 4-phosphate and phosphoenolpyruvate: step 7/7. In terms of biological role, catalyzes the anti-1,4-elimination of the C-3 phosphate and the C-6 proR hydrogen from 5-enolpyruvylshikimate-3-phosphate (EPSP) to yield chorismate, which is the branch point compound that serves as the starting substrate for the three terminal pathways of aromatic amino acid biosynthesis. This reaction introduces a second double bond into the aromatic ring system. In Synechococcus sp. (strain WH7803), this protein is Chorismate synthase.